We begin with the raw amino-acid sequence, 154 residues long: N-acetylneuraminate anomerase NanQ (154 aa).

This sequence belongs to the NanQ anomerase family. The cofactor is Zn(2+).

Its subcellular location is the cytoplasm. The catalysed reaction is N-acetyl-alpha-neuraminate = aceneuramate. It catalyses the reaction N-acetyl-beta-neuraminate = aceneuramate. With respect to regulation, inhibited by 1,10-phenanthroline. In terms of biological role, opens both the alpha- and beta-forms of N-acetylneuraminate (sialic acid; Neu5Ac) to provide aceneuramate, the preferred substrate for NanA. Has preferential activity on the beta-anomer rather than the alpha-anomer. Accelerates a reaction that is spontaneous at slightly alkaline pH, facilitates the reaction at acidic pH. In Escherichia coli (strain K12), this protein is N-acetylneuraminate anomerase NanQ.